A 219-amino-acid chain; its full sequence is Protein OPG170 (219 aa).

Positions 1–16 are cleaved as a signal peptide; the sequence is MYSLVFVILMCIPFSF. N-linked (GlcNAc...) asparagine; by host glycosylation occurs at N70.

Belongs to the orthopoxvirus OPG170 family.

It localises to the secreted. Functionally, may interact with several cellular chemokines to interfere with chemokine-glycosaminoglycan (GAG) interactions at the cell surface to alter chemotaxis of nearby responsive cells. This chain is Protein OPG170 (OPG170), found in Bos taurus (Bovine).